Consider the following 104-residue polypeptide: Large ribosomal subunit protein uL24 (104 aa).

It belongs to the universal ribosomal protein uL24 family. In terms of assembly, part of the 50S ribosomal subunit.

One of two assembly initiator proteins, it binds directly to the 5'-end of the 23S rRNA, where it nucleates assembly of the 50S subunit. Its function is as follows. One of the proteins that surrounds the polypeptide exit tunnel on the outside of the subunit. This is Large ribosomal subunit protein uL24 from Shewanella halifaxensis (strain HAW-EB4).